A 447-amino-acid chain; its full sequence is Acyl-lipid (7-3)-desaturase (447 aa).

A Cytochrome b5 heme-binding domain is found at 36–94; the sequence is LTIVGDSVYDAKAFRSEHPGGAHFVSLFGGRDATEAFMEYHRRAWPKSRMSRFHVGSLA. Positions 53 and 76 each coordinate heme. Helical transmembrane passes span 123–143, 154–174, and 185–205; these read GFAP…AIAL, LLPS…IQHD, and SVNL…ILWL. The Histidine box-1 signature appears at 173 to 177; it reads HDANH. Residues 208–213 carry the Histidine box-2 motif; that stretch reads HVVMHH. Helical transmembrane passes span 244–264, 286–306, and 315–335; these read WLQH…LLFL, LFMP…ALPL, and AVCI…FFFI. The Histidine box-3 motif lies at 386–390; the sequence is QIEHH.

The protein belongs to the fatty acid desaturase type 1 family. The cofactor is Fe(2+).

It is found in the membrane. It carries out the reaction a (7Z,10Z,13Z,16Z,19Z)-docosapentaenoyl-containing glycerolipid + 2 Fe(II)-[cytochrome b5] + O2 + 2 H(+) = a (4Z,7Z,10Z,13Z,16Z,19Z)-docosahexaenoyl-containing glycerolipid + 2 Fe(III)-[cytochrome b5] + 2 H2O. It catalyses the reaction a (7Z,10Z,13Z,16Z)-docosatetraenoyl-containing glycerolipid + 2 Fe(II)-[cytochrome b5] + O2 + 2 H(+) = a (4Z,7Z,10Z,13Z,16Z)-docosapentaenoyl-containing glycerolipid + 2 Fe(III)-[cytochrome b5] + 2 H2O. Its function is as follows. Fatty acid desaturase that introduces a cis double bond at the 4-position in 22-carbon polyunsaturated fatty acids that contain a Delta(7) double bond, resulting in the production of delta-4 desaturated fatty acid docosahexanoic acid (DHA). The chain is Acyl-lipid (7-3)-desaturase from Rebecca salina (Marine microalga).